A 320-amino-acid polypeptide reads, in one-letter code: MANTIKASVVQASTAAYSLPDTLDKLEKLTRLAKERDGAQLAVFPEAFIGGYPKMSTFGLVVGDRQPEGRDEFVRYAKAAIEIPSPAITRIEQISRETNVFIVVGVIERDAGTLYCTAVFVDPEKGYVDKHRKLVPTAMERVIWGQGDGSTLPVLDKSFESASAPGSTVNTKLSATICWENYMPLLRTYYYSQGTQIYCAPTVDARPAWQHTMTHIALEGRCFVLSACQFAQEKDYPPDHAVANASARDPNNVMIAGGSVIISPLGKVLAGPLLDAEGVISAELDLDDVLRGKFDLDVTGHYARNDVFEFKLREPPATSS.

The region spanning 5-286 (IKASVVQAST…EGVISAELDL (282 aa)) is the CN hydrolase domain. Residue E46 is the Proton acceptor of the active site. The active site involves K133. Catalysis depends on C178, which acts as the Nucleophile.

It belongs to the carbon-nitrogen hydrolase superfamily. Nitrilase family.

It catalyses the reaction a nitrile + 2 H2O = a carboxylate + NH4(+). Its function is as follows. Nitrilase that hydrolyzes preferentially fumaronitrile, while 3-phenylpropionitrile, beta-cyano-L-alanine and 4-cyanopyridine are transformed at much lower rates. This chain is Arylacetonitrilase (nit), found in Trametes versicolor (strain FP-101664) (White-rot fungus).